The primary structure comprises 530 residues: Ubiquitin carboxyl-terminal hydrolase 17-like protein 11 (530 aa).

One can recognise a USP domain in the interval 80–375; that stretch reads AGLQNMGNTC…QAYVLFYIQK (296 aa). C89 functions as the Nucleophile in the catalytic mechanism. Catalysis depends on H334, which acts as the Proton acceptor. Composition is skewed to basic and acidic residues over residues 382 to 392 and 398 to 413; these read SESVSRGREPR and DTDR…RDHP. Disordered stretches follow at residues 382–413 and 509–530; these read SESV…RDHP and RGRA…LVCQ. Over residues 510 to 524 the composition is skewed to basic residues; sequence GRARRSKGKNKHSKR.

This sequence belongs to the peptidase C19 family. USP17 subfamily.

Its subcellular location is the nucleus. The protein resides in the endoplasmic reticulum. The enzyme catalyses Thiol-dependent hydrolysis of ester, thioester, amide, peptide and isopeptide bonds formed by the C-terminal Gly of ubiquitin (a 76-residue protein attached to proteins as an intracellular targeting signal).. In terms of biological role, deubiquitinating enzyme that removes conjugated ubiquitin from specific proteins to regulate different cellular processes that may include cell proliferation, progression through the cell cycle, apoptosis, cell migration, and the cellular response to viral infection. This chain is Ubiquitin carboxyl-terminal hydrolase 17-like protein 11 (USP17L11), found in Homo sapiens (Human).